A 128-amino-acid chain; its full sequence is Sulfurtransferase TusD (128 aa).

The active-site Cysteine persulfide intermediate is Cys78.

The protein belongs to the DsrE/TusD family. In terms of assembly, heterohexamer, formed by a dimer of trimers. The hexameric TusBCD complex contains 2 copies each of TusB, TusC and TusD. The TusBCD complex interacts with TusE.

Its subcellular location is the cytoplasm. Its function is as follows. Part of a sulfur-relay system required for 2-thiolation of 5-methylaminomethyl-2-thiouridine (mnm(5)s(2)U) at tRNA wobble positions. Accepts sulfur from TusA and transfers it in turn to TusE. The sequence is that of Sulfurtransferase TusD from Shigella flexneri serotype 5b (strain 8401).